A 210-amino-acid chain; its full sequence is Protein GrpE (210 aa).

The tract at residues 1–31 (MAKDPQTPTDEELARAERDAEPQPGDATDDE) is disordered. Residues 12–21 (ELARAERDAE) show a composition bias toward basic and acidic residues.

The protein belongs to the GrpE family. As to quaternary structure, homodimer.

The protein localises to the cytoplasm. Functionally, participates actively in the response to hyperosmotic and heat shock by preventing the aggregation of stress-denatured proteins, in association with DnaK and GrpE. It is the nucleotide exchange factor for DnaK and may function as a thermosensor. Unfolded proteins bind initially to DnaJ; upon interaction with the DnaJ-bound protein, DnaK hydrolyzes its bound ATP, resulting in the formation of a stable complex. GrpE releases ADP from DnaK; ATP binding to DnaK triggers the release of the substrate protein, thus completing the reaction cycle. Several rounds of ATP-dependent interactions between DnaJ, DnaK and GrpE are required for fully efficient folding. The protein is Protein GrpE of Chromohalobacter salexigens (strain ATCC BAA-138 / DSM 3043 / CIP 106854 / NCIMB 13768 / 1H11).